The sequence spans 226 residues: uncharacterized protein (226 aa).

An N-acetyltransferase domain is found at 18–219; that stretch reads LTIRNYTETD…YGVLMEWKNV (202 aa).

Belongs to the acetyltransferase family.

This is an uncharacterized protein from Bacillus subtilis (strain 168).